A 143-amino-acid chain; its full sequence is Auxin-responsive protein SAUR67 (143 aa).

Belongs to the ARG7 family.

The protein localises to the cell membrane. Functionally, may promote auxin-stimulated organ elongation, such as hypocotyls, stamen filaments and petals. The protein is Auxin-responsive protein SAUR67 of Arabidopsis thaliana (Mouse-ear cress).